Consider the following 862-residue polypeptide: Taxadiene synthase (862 aa).

The disordered stretch occupies residues 45–66 (RVKMSRGSGGPGPVVMMSSSTG). Mg(2+) contacts are provided by Asp613, Asp617, Asn757, Thr761, and Glu765. Positions 613–617 (DDMAD) match the DDXXD motif motif.

It belongs to the terpene synthase family. Mg(2+) serves as cofactor.

The catalysed reaction is (2E,6E,10E)-geranylgeranyl diphosphate = taxa-4(5),11(12)-diene + diphosphate. Its pathway is alkaloid biosynthesis; taxol biosynthesis; taxa-4(20),11-dien-5alpha-ol from geranylgeranyl diphosphate: step 1/2. Catalyzes the cyclization of the ubiquitous isoprenoid intermediate geranylgeranyl diphosphate to taxa-4,11-diene, the parent olefin with a taxane skeleton. In Taxus chinensis (Chinese yew), this protein is Taxadiene synthase (TDC1).